We begin with the raw amino-acid sequence, 325 residues long: Protein ORANGE-ORANGE, chloroplastic (325 aa).

The N-terminal 54 residues, 1-54, are a transit peptide targeting the chloroplast; it reads MDRVLVASYPINHLIRPHSFRIDYCWSTCFTSRLNSGKERQKLSSRWRWRSMAS. The segment covering 53 to 71 has biased composition (low complexity); sequence ASDSTDSSSSSSFAPSVES. The interval 53–77 is disordered; it reads ASDSTDSSSSSSFAPSVESDPSDKT. Helical transmembrane passes span 164–184 and 217–237; these read LYYV…GLLA and IVAS…VVEV. The segment at 226-317 is CR-type-like; sequence VGVISALMVV…CTGMAMASEH (92 aa). Residues 248-255 form a CXXCXGXG motif repeat; sequence CKYCLGTG. The CXXCXXXG motif repeat unit spans residues 259 to 266; sequence CARCSNTG. The CXXCXGXG motif repeat unit spans residues 292 to 299; the sequence is CQNCSGSG. A CXXCXXXG motif repeat occupies 303–310; that stretch reads CPTCLCTG.

Belongs to the orange-like family.

It localises to the plastid. Its subcellular location is the chloroplast membrane. In terms of biological role, triggers accumulation of carotenoids, mainly beta-carotene, in fruit flesh. This chain is Protein ORANGE-ORANGE, chloroplastic, found in Cucumis melo (Muskmelon).